The primary structure comprises 869 residues: Dynamin-3 (869 aa).

The Dynamin-type G domain maps to 28 to 294 (LLELPQIAVV…LTNHIRDTLP (267 aa)). Residues 38 to 45 (GGQSAGKS) form a G1 motif region. 38 to 46 (GGQSAGKSS) provides a ligand contact to GTP. The G2 motif stretch occupies residues 64–66 (VTR). The tract at residues 136-139 (DLPG) is G3 motif. Residues 205 to 208 (TKLD) form a G4 motif region. 205–211 (TKLDLMD) lines the GTP pocket. Tyrosine 231 carries the post-translational modification Phosphotyrosine. The segment at 235-238 (VNRS) is G5 motif. GTP is bound at residue 236–239 (NRSQ). Residue lysine 299 is modified to N6-acetyllysine. The PH domain occupies 525–631 (IVIRKGWLTV…WKASLLRAGV (107 aa)). Tyrosine 603 carries the phosphotyrosine modification. Residue lysine 604 is modified to N6-acetyllysine. A GED domain is found at 659 to 750 (VETIRNLVDS…IIGDINTVTV (92 aa)). The interval 752–869 (TPAPPPVDDS…IRPLESSLLD (118 aa)) is disordered. 2 positions are modified to phosphoserine: serine 769 and serine 773. The segment covering 775 to 796 (TTQRRLTLSAPLPRPASSRGPA) has biased composition (low complexity). 2 stretches are compositionally biased toward pro residues: residues 797 to 822 (PAIP…PPFP) and 832 to 855 (PQVP…PSPT). At serine 853 the chain carries Phosphoserine.

Belongs to the TRAFAC class dynamin-like GTPase superfamily. Dynamin/Fzo/YdjA family. In terms of tissue distribution, isoform-specific expression in germ-cell-depleted testis (Sertoli cells), brain (peripheral sensory neurons), lung and heart.

The protein localises to the cytoplasm. It is found in the cytoskeleton. Its subcellular location is the cytoplasmic vesicle. The protein resides in the golgi apparatus. The catalysed reaction is GTP + H2O = GDP + phosphate + H(+). Microtubule-associated force-producing protein involved in producing microtubule bundles and able to bind and hydrolyze GTP. Most probably involved in vesicular trafficking processes, in particular endocytosis. This Rattus norvegicus (Rat) protein is Dynamin-3 (Dnm3).